We begin with the raw amino-acid sequence, 122 residues long: Large ribosomal subunit protein uL14 (122 aa).

It belongs to the universal ribosomal protein uL14 family. As to quaternary structure, part of the 50S ribosomal subunit. Forms a cluster with proteins L3 and L19. In the 70S ribosome, L14 and L19 interact and together make contacts with the 16S rRNA in bridges B5 and B8.

Binds to 23S rRNA. Forms part of two intersubunit bridges in the 70S ribosome. The sequence is that of Large ribosomal subunit protein uL14 from Symbiobacterium thermophilum (strain DSM 24528 / JCM 14929 / IAM 14863 / T).